A 342-amino-acid polypeptide reads, in one-letter code: Tetraacyldisaccharide 4'-kinase (342 aa).

68–75 (TVGGTGKT) is an ATP binding site.

Belongs to the LpxK family.

It catalyses the reaction a lipid A disaccharide + ATP = a lipid IVA + ADP + H(+). It participates in glycolipid biosynthesis; lipid IV(A) biosynthesis; lipid IV(A) from (3R)-3-hydroxytetradecanoyl-[acyl-carrier-protein] and UDP-N-acetyl-alpha-D-glucosamine: step 6/6. Functionally, transfers the gamma-phosphate of ATP to the 4'-position of a tetraacyldisaccharide 1-phosphate intermediate (termed DS-1-P) to form tetraacyldisaccharide 1,4'-bis-phosphate (lipid IVA). The protein is Tetraacyldisaccharide 4'-kinase of Burkholderia lata (strain ATCC 17760 / DSM 23089 / LMG 22485 / NCIMB 9086 / R18194 / 383).